The following is a 560-amino-acid chain: Serine palmitoyltransferase 2 (560 aa).

Residues proline 65 to leucine 85 form a helical membrane-spanning segment. Lysine 377 is subject to N6-(pyridoxal phosphate)lysine.

Belongs to the class-II pyridoxal-phosphate-dependent aminotransferase family. As to quaternary structure, component of the serine palmitoyltransferase (SPT) complex, which is composed of SPTLC1, SPTLC2 or SPTLC3 and SPTSSA or SPTSSB. The heterodimer consisting of SPTLC1 and SPTLC2/SPTLC3 forms the catalytic core of the enzyme, while SPTSSA or SPTSSB subunits determine substrate specificity. SPT also interacts with ORMDL proteins, especially ORMDL3, which negatively regulate SPT activity in the presence of ceramides. Forms dimers of heterodimers with SPTLC1. It depends on pyridoxal 5'-phosphate as a cofactor. As to expression, expressed in astrocytes.

It localises to the endoplasmic reticulum membrane. It catalyses the reaction L-serine + hexadecanoyl-CoA + H(+) = 3-oxosphinganine + CO2 + CoA. It carries out the reaction octadecanoyl-CoA + L-serine + H(+) = 3-oxoeicosasphinganine + CO2 + CoA. It functions in the pathway lipid metabolism; sphingolipid metabolism. SPT complex catalytic activity is negatively regulated by ORMDL proteins, including ORMDL3, in the presence of ceramides. This mechanism allows to maintain ceramide levels at sufficient concentrations for the production of complex sphingolipids, but which prevents the accumulation of ceramides to levels that trigger apoptosis. Functionally, component of the serine palmitoyltransferase multisubunit enzyme (SPT) that catalyzes the initial and rate-limiting step in sphingolipid biosynthesis by condensing L-serine and activated acyl-CoA (most commonly palmitoyl-CoA) to form long-chain bases. The SPT complex is composed of SPTLC1, SPTLC2 or SPTLC3 and SPTSSA or SPTSSB. Within this complex, the heterodimer consisting of SPTLC1 and SPTLC2/SPTLC3 forms the catalytic core. The composition of the serine palmitoyltransferase (SPT) complex determines the substrate preference. The SPTLC1-SPTLC2-SPTSSA complex shows a strong preference for C16-CoA substrate, while the SPTLC1-SPTLC3-SPTSSA isozyme uses both C14-CoA and C16-CoA as substrates, with a slight preference for C14-CoA. The SPTLC1-SPTLC2-SPTSSB complex shows a strong preference for C18-CoA substrate, while the SPTLC1-SPTLC3-SPTSSB isozyme displays an ability to use a broader range of acyl-CoAs, without apparent preference. Crucial for adipogenesis. This Rattus norvegicus (Rat) protein is Serine palmitoyltransferase 2.